The sequence spans 245 residues: MGQKINPISNRLGIIRGWDSNWCGGDNYGDILYEDSKIRKYLNTRLAKASVSRIVIERTLKLVTVVVCTARPGVIIGKGGQEVDKLKEELKRITSKEVQINIFEIKKPELDAAIVASNIARQLEAKIAYRHVIKVAIAAAMRMGAEGIKVQISGRLNGVEIARSEMYKEGRIPLHTLRANIDYALSEALTKVGLLGVKVWICRGEVYSKQDFVVQFASQRGMNRYEGSGDKSVKRRKRNGIKKNE.

In terms of domain architecture, KH type-2 spans 38 to 106 (IRKYLNTRLA…EVQINIFEIK (69 aa)). The interval 225-245 (YEGSGDKSVKRRKRNGIKKNE) is disordered. A compositionally biased stretch (basic residues) spans 233 to 245 (VKRRKRNGIKKNE).

The protein belongs to the universal ribosomal protein uS3 family. In terms of assembly, part of the 30S ribosomal subunit. Forms a tight complex with proteins S10 and S14.

Binds the lower part of the 30S subunit head. Binds mRNA in the 70S ribosome, positioning it for translation. This is Small ribosomal subunit protein uS3 from Azobacteroides pseudotrichonymphae genomovar. CFP2.